A 330-amino-acid polypeptide reads, in one-letter code: D-cysteine desulfhydrase (330 aa).

Position 52 is an N6-(pyridoxal phosphate)lysine (Lys52).

It belongs to the ACC deaminase/D-cysteine desulfhydrase family. Homodimer. Requires pyridoxal 5'-phosphate as cofactor.

The catalysed reaction is D-cysteine + H2O = hydrogen sulfide + pyruvate + NH4(+) + H(+). Its function is as follows. Catalyzes the alpha,beta-elimination reaction of D-cysteine and of several D-cysteine derivatives. It could be a defense mechanism against D-cysteine. This is D-cysteine desulfhydrase from Yersinia pestis.